The chain runs to 329 residues: Succinylglutamate desuccinylase (329 aa).

His-53, Glu-56, and His-148 together coordinate Zn(2+). Glu-211 is an active-site residue.

The protein belongs to the AspA/AstE family. Succinylglutamate desuccinylase subfamily. Zn(2+) serves as cofactor.

It carries out the reaction N-succinyl-L-glutamate + H2O = L-glutamate + succinate. It participates in amino-acid degradation; L-arginine degradation via AST pathway; L-glutamate and succinate from L-arginine: step 5/5. Transforms N(2)-succinylglutamate into succinate and glutamate. The chain is Succinylglutamate desuccinylase from Erwinia tasmaniensis (strain DSM 17950 / CFBP 7177 / CIP 109463 / NCPPB 4357 / Et1/99).